The chain runs to 247 residues: Cell division protein ZapD (247 aa).

This sequence belongs to the ZapD family. In terms of assembly, interacts with FtsZ.

The protein resides in the cytoplasm. In terms of biological role, cell division factor that enhances FtsZ-ring assembly. Directly interacts with FtsZ and promotes bundling of FtsZ protofilaments, with a reduction in FtsZ GTPase activity. The chain is Cell division protein ZapD from Shigella flexneri.